A 249-amino-acid chain; its full sequence is MTRKLVLLRHGQSQWNSMNRFTGWVDIGLTEQGHQEATMAGHLMKKEGLEFDVAHTSLLKRAIHTLQDALKALDQDWLPIYKSWRLNERHYGALQGLDKIDTAAKHGEEQVNIWRRSYDIQPPPIDLDDPSHPMRDRRYAALDRKVLPVRESLKNTLERVLPYWNDAIAPQLNDNKTVLISAHGNSLRALYKYLNKESDEKILNVNIPTGIPLLFELSDTLQVVSYRYLGDPDAAQRAAEMVANQGKAK.

Residues 9 to 16 (RHGQSQWN), 22 to 23 (TG), arginine 61, 88 to 91 (ERHY), lysine 99, 115 to 116 (RR), and 184 to 185 (GN) contribute to the substrate site. The active-site Tele-phosphohistidine intermediate is the histidine 10. Residue glutamate 88 is the Proton donor/acceptor of the active site.

This sequence belongs to the phosphoglycerate mutase family. BPG-dependent PGAM subfamily. Homodimer.

It catalyses the reaction (2R)-2-phosphoglycerate = (2R)-3-phosphoglycerate. It functions in the pathway carbohydrate degradation; glycolysis; pyruvate from D-glyceraldehyde 3-phosphate: step 3/5. In terms of biological role, catalyzes the interconversion of 2-phosphoglycerate and 3-phosphoglycerate. This Xylella fastidiosa (strain M23) protein is 2,3-bisphosphoglycerate-dependent phosphoglycerate mutase.